The sequence spans 1487 residues: Murinoglobulin-1 (1487 aa).

Positions 1–24 (MKKNREAQLCLFSALLAFLPFASL) are cleaved as a signal peptide. A disulfide bridge links C48 with C86. 2 N-linked (GlcNAc...) asparagine glycosylation sites follow: N55 and N247. Cystine bridges form between C251–C283 and C269–C295. Residues N301, N321, N393, and N508 are each glycosylated (N-linked (GlcNAc...) asparagine). 3 cysteine pairs are disulfide-bonded: C468–C563, C595–C784, and C643–C689. Residues 686–745 (PTYCYEMNMVVLSAPAVESELSPRGGEFEMMPLGVNKSPLPKEPPRKDPPPKDPVIETIR) form a bait region region. N-linked (GlcNAc...) asparagine glycosylation is found at N760, N787, and N882. Cystine bridges form between C860–C896, C934–C1334, C1092–C1140, and C1365–C1480. The isoglutamyl cysteine thioester (Cys-Gln) cross-link spans 985-988 (CGEQ). The N-linked (GlcNAc...) asparagine glycan is linked to N1004. Residues N1153, N1324, and N1437 are each glycosylated (N-linked (GlcNAc...) asparagine).

This sequence belongs to the protease inhibitor I39 (alpha-2-macroglobulin) family. As to quaternary structure, monomer. Plasma.

It localises to the secreted. Its function is as follows. A proteinase activates the inhibitor by specific proteolysis in the bait region, which, by an unknown mechanism leads to reaction at the cysteinyl-glutamyl internal thiol ester site and to a conformational change, whereby the proteinase is trapped and/or covalently bound to the inhibitor. While in the tetrameric proteinase inhibitors steric inhibition is sufficiently strong, monomeric forms need a covalent linkage between the activated glutamyl residue of the original thiol ester and a terminal amino group of a lysine or another nucleophilic group on the proteinase, for inhibition to be effective. This Rattus norvegicus (Rat) protein is Murinoglobulin-1.